We begin with the raw amino-acid sequence, 227 residues long: Ion-translocating oxidoreductase complex subunit E (227 aa).

6 helical membrane passes run 18 to 38 (ALVQ…VTNA), 39 to 59 (LGLG…VSLV), 69 to 89 (IPVF…LMNA), 93 to 113 (GLYL…IIIG), 125 to 145 (LPAV…LVLL), and 182 to 202 (HFLL…LIAL).

It belongs to the NqrDE/RnfAE family. As to quaternary structure, the complex is composed of six subunits: RnfA, RnfB, RnfC, RnfD, RnfE and RnfG.

It localises to the cell inner membrane. Part of a membrane-bound complex that couples electron transfer with translocation of ions across the membrane. In Aliivibrio fischeri (strain MJ11) (Vibrio fischeri), this protein is Ion-translocating oxidoreductase complex subunit E.